Here is a 360-residue protein sequence, read N- to C-terminus: MKSSMLGRLEQLAHRLIEVDALLADPDSAGDMDRFRRLSRERAELEPVVLAFNAFQSTQADLATAQEMLADPEMKAMAEEEIKAARERIEVLEGELQVLLLPRDPNDGRSLFLEIRAGTGGDESALFSGDLLRMYSRYAESQGWRVEIMSESPSELGGYKEVIARIDGDGAYGRLKFESGAHRVQRVPATEAQGRIHTSACTVAVMPEADEMNDIVINPADLRIDTFRASGAGGQHINKTDSAVRITHLPTGLVVECQDDRSQHRNKDRAMQVLAARLKDKELRERQSKEAAERKSLVGSGDRSERIRTYNYPQGRVTDHRINLTLYKLQQILEGDLNELTGALLAEHQAEQLAALGEDI.

An N5-methylglutamine modification is found at Q235. Positions 284–303 (RERQSKEAAERKSLVGSGDR) are disordered.

This sequence belongs to the prokaryotic/mitochondrial release factor family. Post-translationally, methylated by PrmC. Methylation increases the termination efficiency of RF1.

It is found in the cytoplasm. In terms of biological role, peptide chain release factor 1 directs the termination of translation in response to the peptide chain termination codons UAG and UAA. The protein is Peptide chain release factor 1 of Bordetella avium (strain 197N).